The chain runs to 368 residues: F-box/kelch-repeat protein At5g51250 (368 aa).

The region spanning 1-44 is the F-box domain; the sequence is MSSLPDDLLLSIFARISRLYYPTLSLVSKSFRSLLASPDLYKAR. Kelch repeat units follow at residues 116-163, 165-218, and 260-304; these read DIYN…VLDR, IYVA…CIDG, and LFYI…YGGK.

This is F-box/kelch-repeat protein At5g51250 from Arabidopsis thaliana (Mouse-ear cress).